A 197-amino-acid polypeptide reads, in one-letter code: MASSTALSLSWSSSPCWSHSFNGGANETLKVSERRFNFEVVSQKKAKKLRKVILKEDVTDLGKQGQLLDVKAGFFRNFLLPTGKAQLMTPLLLKELKMEDERIEAEKQRVKEEAQQLAMVFQTVGAFKVKRKGGKGKLIFGSVTAQDLVDIIKSQLQKDIDKRLVSLPEIRETGEYIAELKLHPDVTARVKINVFAN.

Residues 1–42 (MASSTALSLSWSSSPCWSHSFNGGANETLKVSERRFNFEVVS) constitute a chloroplast transit peptide.

Belongs to the bacterial ribosomal protein bL9 family. Part of the 50S ribosomal subunit.

It localises to the plastid. The protein resides in the chloroplast. In terms of biological role, binds to the 23S rRNA. The sequence is that of Large ribosomal subunit protein bL9c (RPL9) from Arabidopsis thaliana (Mouse-ear cress).